A 228-amino-acid chain; its full sequence is MSPSILGRKIGMTQIFLEDGTAVPVTVVQAGPCHVLQVRSKDRDGYEAVQMGFEDKPRRLAKRSERGQVATIESKRSKKRSAAGIEAPAKADCEPQRFVREFRGSSEANVGDTLTVEQFNDVKKVDITGTSKGRGFAGVMKRHNFAGQRATHGVKKCHRHAGGTGMSASPSRTFKGKRMAGQYGNAKVTTRNLEVVRVDAENNLLMIRGAVPGPNGGFVSIRQTNKVG.

The disordered stretch occupies residues 157-176; that stretch reads CHRHAGGTGMSASPSRTFKG.

This sequence belongs to the universal ribosomal protein uL3 family. In terms of assembly, part of the 50S ribosomal subunit. Forms a cluster with proteins L14 and L19.

One of the primary rRNA binding proteins, it binds directly near the 3'-end of the 23S rRNA, where it nucleates assembly of the 50S subunit. The chain is Large ribosomal subunit protein uL3 from Rhodopirellula baltica (strain DSM 10527 / NCIMB 13988 / SH1).